The chain runs to 1136 residues: Probable RNA-dependent RNA polymerase 2 (1136 aa).

The disordered stretch occupies residues 965–989 (SGDSGALSSSSAQPSPTYDPDLEVP). Low complexity predominate over residues 967 to 980 (DSGALSSSSAQPSP).

The protein belongs to the RdRP family.

It catalyses the reaction RNA(n) + a ribonucleoside 5'-triphosphate = RNA(n+1) + diphosphate. In terms of biological role, probably involved in the RNA silencing pathway and required for the generation of small interfering RNAs (siRNAs). This Oryza sativa subsp. japonica (Rice) protein is Probable RNA-dependent RNA polymerase 2 (RDR2).